Here is a 222-residue protein sequence, read N- to C-terminus: Protein-L-isoaspartate O-methyltransferase (222 aa).

Residue serine 65 is part of the active site.

The protein belongs to the methyltransferase superfamily. L-isoaspartyl/D-aspartyl protein methyltransferase family.

Its subcellular location is the cytoplasm. It catalyses the reaction [protein]-L-isoaspartate + S-adenosyl-L-methionine = [protein]-L-isoaspartate alpha-methyl ester + S-adenosyl-L-homocysteine. Its function is as follows. Catalyzes the methyl esterification of L-isoaspartyl residues in peptides and proteins that result from spontaneous decomposition of normal L-aspartyl and L-asparaginyl residues. It plays a role in the repair and/or degradation of damaged proteins. The chain is Protein-L-isoaspartate O-methyltransferase from Chlorobium luteolum (strain DSM 273 / BCRC 81028 / 2530) (Pelodictyon luteolum).